Here is a 306-residue protein sequence, read N- to C-terminus: D-alanine--D-alanine ligase (306 aa).

Residues 102–300 (KIVVASVGVS…YGDIVQWMVE (199 aa)) form the ATP-grasp domain. 128–183 (PMEPPYVIKPVCEGSSLGVIIVKENESVPSLNVVGSEWVYADTVIVEKYIPGRELT) is an ATP binding site. 3 residues coordinate Mg(2+): Asp-253, Glu-267, and Asn-269.

The protein belongs to the D-alanine--D-alanine ligase family. Mg(2+) is required as a cofactor. Mn(2+) serves as cofactor.

The protein localises to the cytoplasm. It catalyses the reaction 2 D-alanine + ATP = D-alanyl-D-alanine + ADP + phosphate + H(+). It participates in cell wall biogenesis; peptidoglycan biosynthesis. Cell wall formation. The polypeptide is D-alanine--D-alanine ligase (Bartonella henselae (strain ATCC 49882 / DSM 28221 / CCUG 30454 / Houston 1) (Rochalimaea henselae)).